The chain runs to 539 residues: Glucose-6-phosphate isomerase (539 aa).

The Proton donor role is filled by glutamate 349. Active-site residues include histidine 380 and lysine 508. Residues 519-539 (ESGASGQHDPSTAGLIQRLKR) are disordered.

Belongs to the GPI family.

The protein localises to the cytoplasm. It carries out the reaction alpha-D-glucose 6-phosphate = beta-D-fructose 6-phosphate. It participates in carbohydrate biosynthesis; gluconeogenesis. It functions in the pathway carbohydrate degradation; glycolysis; D-glyceraldehyde 3-phosphate and glycerone phosphate from D-glucose: step 2/4. In terms of biological role, catalyzes the reversible isomerization of glucose-6-phosphate to fructose-6-phosphate. The protein is Glucose-6-phosphate isomerase of Caulobacter vibrioides (strain ATCC 19089 / CIP 103742 / CB 15) (Caulobacter crescentus).